The primary structure comprises 109 residues: Oncomodulin (109 aa).

Position 2 is an N-acetylserine (Ser-2). EF-hand domains lie at 39-74 and 78-109; these read MSAS…FESG and LTES…MVHS. Positions 52, 54, 56, 58, 63, 91, 93, 95, 97, and 102 each coordinate Ca(2+).

This sequence belongs to the parvalbumin family. In terms of tissue distribution, abundant in the organ of Corti.

Its function is as follows. Has some calmodulin-like activity with respect to enzyme activation and growth regulation. Binds two calcium ions. The chain is Oncomodulin (OCM) from Cavia porcellus (Guinea pig).